Reading from the N-terminus, the 453-residue chain is MTTDTIVAQATALGRGGVGIIRVSGPLAAHVAQTVTGRTLRPRYAEYLPFTDEDGQQLDQGIALFFPNPHSFTGEDVLELQGHGGPVVMDMLIRRILQIKGVRPARPGEFSERAFLNDKMDLTQAEAIADLIDASSEQAAKSALQSLQGEFSKRIHTLVESLIHLRIYVEAAIDFPEEEIDFLADGKVSADLQTIIDNLAAVRREANQGAIMREGMKVVIAGRPNAGKSSLLNALSGKESAIVTDIAGTTRDVLREHIHIDGMPLHIIDTAGLRDASDAVEKIGIERAWEEIRQADRVLFMVDGTTTEATDPQDIWPDFVDKLPENIGITVIRNKADQTGEPLGICHVNQPTLIRLSAKTGQGVDALRQHLKECMGFSGNQEGGFMARRRHLDALERAAEHLAIGQQQLEGYMAGEILAEELRIAQQHLNEITGEFSSDDLLGRIFSSFCIGK.

(6S)-5-formyl-5,6,7,8-tetrahydrofolate contacts are provided by Arg-22, Glu-79, and Lys-119. A TrmE-type G domain is found at 215–376 (GMKVVIAGRP…LRQHLKECMG (162 aa)). A K(+)-binding site is contributed by Asn-225. GTP is bound by residues 225–230 (NAGKSS), 244–250 (TDIAGTT), 269–272 (DTAG), and 334–337 (NKAD). Residue Ser-229 coordinates Mg(2+). The K(+) site is built by Thr-244, Ile-246, and Thr-249. A Mg(2+)-binding site is contributed by Thr-250. Lys-453 contacts (6S)-5-formyl-5,6,7,8-tetrahydrofolate.

It belongs to the TRAFAC class TrmE-Era-EngA-EngB-Septin-like GTPase superfamily. TrmE GTPase family. Homodimer. Heterotetramer of two MnmE and two MnmG subunits. K(+) is required as a cofactor.

Its subcellular location is the cytoplasm. Its function is as follows. Exhibits a very high intrinsic GTPase hydrolysis rate. Involved in the addition of a carboxymethylaminomethyl (cmnm) group at the wobble position (U34) of certain tRNAs, forming tRNA-cmnm(5)s(2)U34. This is tRNA modification GTPase MnmE from Vibrio cholerae serotype O1 (strain ATCC 39541 / Classical Ogawa 395 / O395).